The following is a 264-amino-acid chain: MTKFRGCIDIHSGQVKQIVGGTLTDSDADLKTNFVATQPPGYFAQLYKDNNVVGTHVIKLGPGCDEAAEEALAGWPDHLQIGGGINHDNAEKWIKLGASHVIVTSFLFPDAKLDMKRLTDLEAILEPYGGKKRIVVDLSCRRKDGKWVVAMNRWQTLTDTEVNKETLEQLAKHCDEFLIHAADVEGLCNGIDEELVTKLGEWLEEGHLPPVTYAGGAKNIDDLALVQKLSHGKVDLTYGSALDVFGGDKVKFSDCVEWNEKMHK.

The protein belongs to the HisA/HisF family.

It localises to the cytoplasm. The enzyme catalyses 1-(5-phospho-beta-D-ribosyl)-5-[(5-phospho-beta-D-ribosylamino)methylideneamino]imidazole-4-carboxamide = 5-[(5-phospho-1-deoxy-D-ribulos-1-ylimino)methylamino]-1-(5-phospho-beta-D-ribosyl)imidazole-4-carboxamide. Its pathway is amino-acid biosynthesis; L-histidine biosynthesis; L-histidine from 5-phospho-alpha-D-ribose 1-diphosphate: step 4/9. The protein is 1-(5-phosphoribosyl)-5-[(5-phosphoribosylamino)methylideneamino] imidazole-4-carboxamide isomerase (HIS6) of Yarrowia lipolytica (strain CLIB 122 / E 150) (Yeast).